The following is a 135-amino-acid chain: ATP synthase epsilon chain (135 aa).

It belongs to the ATPase epsilon chain family. As to quaternary structure, F-type ATPases have 2 components, CF(1) - the catalytic core - and CF(0) - the membrane proton channel. CF(1) has five subunits: alpha(3), beta(3), gamma(1), delta(1), epsilon(1). CF(0) has three main subunits: a, b and c.

The protein resides in the cell inner membrane. In terms of biological role, produces ATP from ADP in the presence of a proton gradient across the membrane. The protein is ATP synthase epsilon chain of Mesorhizobium japonicum (strain LMG 29417 / CECT 9101 / MAFF 303099) (Mesorhizobium loti (strain MAFF 303099)).